The sequence spans 837 residues: Enterin neuropeptides (837 aa).

The first 25 residues, 1–25 (MAKHDVTVMTLLLVVCALHVFDAQG), serve as a signal peptide directing secretion. Residues 26–47 (TDVKLNDGFLRSGIMNIPFQRR) constitute a propeptide that is removed on maturation. A Valine amide modification is found at valine 57. The propeptide occupies 61-134 (SGFQSPVSPS…ENKRFSKENE (74 aa)). Valine 146 is modified (valine amide). A propeptide spanning residues 150–178 (MDLSALEKELIAKLKAADLLSPLETEAPG) is cleaved from the precursor. Position 190 is a leucine amide (leucine 190). A propeptide spanning residues 194 to 201 (MPVDVFPR) is cleaved from the precursor. Valine 211 is subject to Valine amide. Positions 215 to 234 (SGNGENYFDDLDTFGDISQR) are excised as a propeptide. A Valine amide modification is found at valine 244. A propeptide spanning residues 248–266 (GNTDFSRNPLARLSQVQNR) is cleaved from the precursor. At valine 276 the chain carries Valine amide. The propeptide occupies 280 to 285 (SVHNIV). Valine 297 carries the post-translational modification Valine amide. A propeptide spanning residues 301 to 325 (DFEDASEGLDEEEGDIDGYSDDLDV) is cleaved from the precursor. Valine amide occurs at positions 336, 348, 360, 372, 384, 396, 408, 420, 432, 444, 456, 468, 480, 492, 504, 516, 528, and 540. Positions 544–595 (ELGEDEINFLKEVDAADISRQLAEEDEKEAMVSVDDKETLSNEEDASEDDFE) are excised as a propeptide. Positions 567–594 (EEDEKEAMVSVDDKETLSNEEDASEDDF) are disordered. Residues 584 to 593 (SNEEDASEDD) are compositionally biased toward acidic residues. Glutamate 598 bears the Pyrrolidone carboxylic acid (Glu); in form ENl' mark. Valine 606 bears the Valine amide mark. Positions 610-627 (DEEGDMGVEMEEEMESEK) are excised as a propeptide. At leucine 637 the chain carries Leucine amide. Glutamine 641 carries the post-translational modification Pyrrolidone carboxylic acid. Valine 649 is subject to Valine amide. A Pyrrolidone carboxylic acid modification is found at glutamine 653. Residues valine 661 and valine 673 each carry the valine amide modification. Glutamine 677 carries the pyrrolidone carboxylic acid modification. Valine amide is present on residues valine 685 and valine 697. Glutamine 701 carries the post-translational modification Pyrrolidone carboxylic acid. Residue valine 709 is modified to Valine amide. At glutamine 713 the chain carries Pyrrolidone carboxylic acid. Valine 721 carries the post-translational modification Valine amide. Residue glutamine 725 is modified to Pyrrolidone carboxylic acid. Position 733 is a valine amide (valine 733). Residues 734–837 (GKRSGAEDID…DSHIMATSST (104 aa)) constitute a propeptide that is removed on maturation. A disordered region spans residues 772–837 (GQPAAANEEE…DSHIMATSST (66 aa)). A compositionally biased stretch (acidic residues) spans 778 to 791 (NEEELQQEAAEESE).

In terms of tissue distribution, high expression in gut and CNS.

It localises to the secreted. Its function is as follows. Reduce interneurons B4/5 activity. May play a regulatory role in nonfeeding behaviors. The chain is Enterin neuropeptides (ENPP) from Aplysia californica (California sea hare).